The primary structure comprises 290 residues: Light-independent protochlorophyllide reductase iron-sulfur ATP-binding protein (290 aa).

ATP contacts are provided by residues 10 to 15 (GIGKST) and K39. Position 14 (S14) interacts with Mg(2+). 2 residues coordinate [4Fe-4S] cluster: C95 and C129. Residue 180-181 (NR) coordinates ATP.

The protein belongs to the NifH/BchL/ChlL family. Homodimer. Protochlorophyllide reductase is composed of three subunits; ChlL, ChlN and ChlB. Requires [4Fe-4S] cluster as cofactor.

It localises to the plastid. The protein localises to the chloroplast. The enzyme catalyses chlorophyllide a + oxidized 2[4Fe-4S]-[ferredoxin] + 2 ADP + 2 phosphate = protochlorophyllide a + reduced 2[4Fe-4S]-[ferredoxin] + 2 ATP + 2 H2O. It participates in porphyrin-containing compound metabolism; chlorophyll biosynthesis (light-independent). Functionally, component of the dark-operative protochlorophyllide reductase (DPOR) that uses Mg-ATP and reduced ferredoxin to reduce ring D of protochlorophyllide (Pchlide) to form chlorophyllide a (Chlide). This reaction is light-independent. The L component serves as a unique electron donor to the NB-component of the complex, and binds Mg-ATP. The sequence is that of Light-independent protochlorophyllide reductase iron-sulfur ATP-binding protein from Zygnema circumcarinatum (Green alga).